The primary structure comprises 135 residues: Small ribosomal subunit protein uS11 (135 aa).

A compositionally biased stretch (low complexity) spans 1 to 11 (MPPKARAGAAV). Residues 1 to 22 (MPPKARAGAAVKKVRRKERKNV) form a disordered region.

The protein belongs to the universal ribosomal protein uS11 family. Part of the 30S ribosomal subunit. Interacts with proteins S7 and S18. Binds to IF-3.

Located on the platform of the 30S subunit, it bridges several disparate RNA helices of the 16S rRNA. Forms part of the Shine-Dalgarno cleft in the 70S ribosome. The polypeptide is Small ribosomal subunit protein uS11 (Salinispora tropica (strain ATCC BAA-916 / DSM 44818 / JCM 13857 / NBRC 105044 / CNB-440)).